The following is an 833-amino-acid chain: MTDSVIRIKRYHYIHILDNNTNVTRTISGPVVYTRKEHETCLFDPCPCVSVPPRHYCVVKNPCVRGEAGEVVLESSGQVKLRLGDSEIRFEGEPFPLYPGEELDCRDGKGVQKLQLIPPNTGLHVRCVRDFKDADRRVGAGTEWMVAGPQTYIPRVEVVVVEEVKATVIYPNTALLVQANVNFTDRCGVPRVAGEKWLVRALGAYLKSVEETVLGLIQGTMLSDLKALRLSAVRSFTDVYGKARRAGEQWQVTLKDAPVHIVDAYETKVADVAAVSLSAKEYVIIHHPVDDTGHNRFGETLVRRGECTFFLQPGETMPRGVEQVLVVGKEEALLLEAVCEYRDGGEKRQPGSRWMVHGPLEYIPANEVKLLEHRRMMALDKNEGIYIMNTTTGEVRAVIGKPYMLDVNEVLWEKHLPLAVEELLESPNGSIQTSERNPGFVSHREKYRIVRFNVQHNAAVQIYDYRKKQPRIVLGPNLVMLAPHEEFTVLSLSGGTPKVPNSLQSLQLFLGPRFSSDTIVVETSDHARLRLRLSYNWYFDIDRANPSRRTFSVPDFIGDCCKTIASRVRGAVAAEDFDSFHRNSAKIIRTAVFGVDEAGETKKNLRFTANDFVVTNIDVQSSEPTDEKTRDSLQKSVQLAIEITTKSQEAAARHGNELKDQEAKGQLERQKLLDKIEVENARTKWLELQAKSEAVQASGQSVAEAKARAEALFIEVRSEMQQAEMRAKAYRISAEAELQKLQQRQALELEYTQRQNEIDVSKARAAAEAEAEKVKRMVDCIGRDTLVAIARAGPETQVKLLSSLGLKGYLITDGNSPVNLFGTAQGMIGEPKK.

7 MVP repeats span residues 54 to 118, 119 to 170, 171 to 223, 224 to 278, 280 to 328, 329 to 380, and 381 to 433; these read RHYC…QLIP, PNTG…TVIY, PNTA…TMLS, DLKA…VSLS, KEYV…LVVG, KEEA…MALD, and KNEG…SIQT.

In terms of assembly, the vault ribonucleoprotein particle is a huge (400 A x 670 A) cage structure of 12.9 MDa. It consists of a dimer of half-vaults, with each half-vault comprising 39 identical major vault protein (MVP) chains, PARP4 and one or more vault RNAs (vRNAs).

It localises to the cytoplasm. It is found in the nucleus. Required for normal vault structure. Vaults are multi-subunit structures that may act as scaffolds for proteins involved in signal transduction. Vaults may also play a role in nucleo-cytoplasmic transport. The chain is Major vault protein from Leishmania infantum.